Here is an 88-residue protein sequence, read N- to C-terminus: MANIKSAKKRIKVIETKTLRNKMIKSALKTKIKNFEVAVANNDLNEAKSAYTIVVKALDMAAAKGILHKNKAARKKSRLATKLSGLNA.

The protein belongs to the bacterial ribosomal protein bS20 family.

In terms of biological role, binds directly to 16S ribosomal RNA. The chain is Small ribosomal subunit protein bS20 from Clostridium novyi (strain NT).